A 200-amino-acid polypeptide reads, in one-letter code: Protein Rv0461 (200 aa).

The interval 47–67 is disordered; that stretch reads DRAGKSWPGSTPKPQEDPVGV. A run of 3 helical transmembrane segments spans residues 102 to 122, 134 to 154, and 159 to 179; these read FVLVVLGVWIGAGEVGLSLFY, VFVVLVYVVACTVGGLILALV, and LITALSLGVMSGPFASVAAAA.

It is found in the cell membrane. The chain is Protein Rv0461 from Mycobacterium tuberculosis (strain ATCC 25618 / H37Rv).